Consider the following 125-residue polypeptide: Large ribosomal subunit protein bL19 (125 aa).

This sequence belongs to the bacterial ribosomal protein bL19 family.

In terms of biological role, this protein is located at the 30S-50S ribosomal subunit interface and may play a role in the structure and function of the aminoacyl-tRNA binding site. This chain is Large ribosomal subunit protein bL19, found in Ehrlichia canis (strain Jake).